The sequence spans 134 residues: Small ribosomal subunit protein uS11 (134 aa).

It belongs to the universal ribosomal protein uS11 family. Part of the 30S ribosomal subunit. Interacts with proteins S7 and S18. Binds to IF-3.

Its function is as follows. Located on the platform of the 30S subunit, it bridges several disparate RNA helices of the 16S rRNA. Forms part of the Shine-Dalgarno cleft in the 70S ribosome. In Acidovorax ebreus (strain TPSY) (Diaphorobacter sp. (strain TPSY)), this protein is Small ribosomal subunit protein uS11.